A 514-amino-acid polypeptide reads, in one-letter code: Endogenous retrovirus group PABLB member 1 Env polyprotein (514 aa).

Asn-58 carries an N-linked (GlcNAc...) asparagine glycan. The tract at residues 60–316 (STSNVFLQWA…YPYLPHVVNQ (257 aa)) is surface protein. A CXXC motif is present at residues 82 to 85 (CWVC). N-linked (GlcNAc...) asparagine glycans are attached at residues Asn-133, Asn-140, Asn-155, Asn-218, Asn-226, and Asn-267. The transmembrane protein stretch occupies residues 317 to 514 (GTRAIVHRND…QRDIFHSNAP (198 aa)). Residues 328–348 (LPTIFMPSVGLGTVIQHIEAL) are fusion peptide. 2 N-linked (GlcNAc...) asparagine glycosylation sites follow: Asn-350 and Asn-357. The short motif at 378–394 (LQNRMALDILTAAEGGT) is the CKS-17 element. Cys-395 and Cys-402 are oxidised to a cystine. The CX6CC signature appears at 395 to 403 (CALIKTECC). N-linked (GlcNAc...) asparagine glycans are attached at residues Asn-408 and Asn-412. The chain crosses the membrane as a helical span at residues 452 to 472 (ILIVLATLWSVGIALCCGLYF).

It belongs to the gamma type-C retroviral envelope protein family. HERV class-I R(b) env subfamily. The CXXC motif is highly conserved across a broad range of retroviral envelope proteins. It is thought to participate in the formation of a labile disulfide bond possibly with the CX6CC motif present in the transmembrane domain. In terms of tissue distribution, low expression in placenta and testis.

It localises to the cell membrane. Retroviral envelope proteins mediate receptor recognition and membrane fusion during early infection. Endogenous envelope proteins may have kept, lost or modified their original function during evolution. This endogenous envelope protein has lost its original fusogenic properties. The protein is Endogenous retrovirus group PABLB member 1 Env polyprotein (ERVPABLB-1) of Homo sapiens (Human).